The following is a 308-amino-acid chain: F420-non-reducing hydrogenase subunit G (308 aa).

It belongs to the [NiFe]/[NiFeSe] hydrogenase small subunit family. The F420-non-reducing hydrogenase is composed of three subunits; MvhA, MvhD and MvhG. It forms a complex with the heterodisulfide reductase (hdr).

In terms of biological role, part of a complex that provides reducing equivalents for heterodisulfide reductase. The sequence is that of F420-non-reducing hydrogenase subunit G (mvhG) from Methanothermobacter thermautotrophicus (strain ATCC 29096 / DSM 1053 / JCM 10044 / NBRC 100330 / Delta H) (Methanobacterium thermoautotrophicum).